Reading from the N-terminus, the 252-residue chain is Large ribosomal subunit protein uL29m (252 aa).

Lys-146 bears the N6-acetyllysine mark.

Belongs to the universal ribosomal protein uL29 family. As to quaternary structure, component of the mitochondrial ribosome large subunit (39S) which comprises a 16S rRNA and about 50 distinct proteins.

The protein resides in the mitochondrion. The protein is Large ribosomal subunit protein uL29m (MRPL47) of Bos taurus (Bovine).